Reading from the N-terminus, the 102-residue chain is MEVGIAHYLTVSAVLFTLGIFGIFLNRKNVIIILMSIELILLAVNLNFIAFSAVLGDLVGQVFALFVLTVAAAEAAIGLAILVVFFRNRGSIAVEDINMMKG.

A run of 3 helical transmembrane segments spans residues 5-25, 31-51, and 66-86; these read IAHYLTVSAVLFTLGIFGIFL, IIILMSIELILLAVNLNFIAF, and FVLTVAAAEAAIGLAILVVFF.

It belongs to the complex I subunit 4L family. In terms of assembly, NDH-1 is composed of 14 different subunits. Subunits NuoA, H, J, K, L, M, N constitute the membrane sector of the complex.

It localises to the cell inner membrane. The enzyme catalyses a quinone + NADH + 5 H(+)(in) = a quinol + NAD(+) + 4 H(+)(out). NDH-1 shuttles electrons from NADH, via FMN and iron-sulfur (Fe-S) centers, to quinones in the respiratory chain. The immediate electron acceptor for the enzyme in this species is believed to be ubiquinone. Couples the redox reaction to proton translocation (for every two electrons transferred, four hydrogen ions are translocated across the cytoplasmic membrane), and thus conserves the redox energy in a proton gradient. The polypeptide is NADH-quinone oxidoreductase subunit K (Chelativorans sp. (strain BNC1)).